The chain runs to 444 residues: Ribosomal protein uS12 methylthiotransferase RimO (444 aa).

The MTTase N-terminal domain maps to 2–118; that stretch reads LKIALESLGC…IDKILKELSE (117 aa). [4Fe-4S] cluster-binding residues include C11, C47, C81, C155, C159, and C162. A Radical SAM core domain is found at 141 to 371; the sequence is STPSYMAYLK…MMIQQKISEE (231 aa). In terms of domain architecture, TRAM spans 374–441; the sequence is DKKIGKTYEV…EYDLMGDVLY (68 aa).

This sequence belongs to the methylthiotransferase family. RimO subfamily. The cofactor is [4Fe-4S] cluster.

Its subcellular location is the cytoplasm. The catalysed reaction is L-aspartate(89)-[ribosomal protein uS12]-hydrogen + (sulfur carrier)-SH + AH2 + 2 S-adenosyl-L-methionine = 3-methylsulfanyl-L-aspartate(89)-[ribosomal protein uS12]-hydrogen + (sulfur carrier)-H + 5'-deoxyadenosine + L-methionine + A + S-adenosyl-L-homocysteine + 2 H(+). Its function is as follows. Catalyzes the methylthiolation of an aspartic acid residue of ribosomal protein uS12. The protein is Ribosomal protein uS12 methylthiotransferase RimO of Clostridioides difficile (strain 630) (Peptoclostridium difficile).